The chain runs to 250 residues: MSKPGAELEEVFSSVQGEGMLIGLRQVFIRFRGCNLTCDYCDTPAGTPAEPCRIEQTPGRRDFVPADNPVSLDRVAALVEGWQRGWPGVHDSISITGGEPLLRHDILMQWLPVLREHLPVYLETNGVMHAALGLVINHVDIIGMDIKIPSTSGCTDLWDDHRQFLEIANTRRAFIKIVVGEETEDWEITRASEIIAGVNRDIPLILQPVTRAGDTLGIKPVKALELQELACRYLAEVRIIPQTHRFMGQL.

Substrate contacts are provided by residues 15-17 and Arg30; that span reads VQG. A Radical SAM core domain is found at 21 to 250; sequence LIGLRQVFIR…PQTHRFMGQL (230 aa). Residues Cys34, Cys38, and Cys41 each contribute to the [4Fe-4S] cluster site. Thr43 provides a ligand contact to Mg(2+). Thr96 contributes to the substrate binding site. Gly98 contributes to the S-adenosyl-L-methionine binding site.

This sequence belongs to the radical SAM superfamily. 7-carboxy-7-deazaguanine synthase family. As to quaternary structure, homodimer. The cofactor is [4Fe-4S] cluster. It depends on S-adenosyl-L-methionine as a cofactor. Mg(2+) serves as cofactor.

The catalysed reaction is 6-carboxy-5,6,7,8-tetrahydropterin + H(+) = 7-carboxy-7-deazaguanine + NH4(+). Its pathway is purine metabolism; 7-cyano-7-deazaguanine biosynthesis. Functionally, catalyzes the complex heterocyclic radical-mediated conversion of 6-carboxy-5,6,7,8-tetrahydropterin (CPH4) to 7-carboxy-7-deazaguanine (CDG), a step common to the biosynthetic pathways of all 7-deazapurine-containing compounds. This Geobacter sulfurreducens (strain ATCC 51573 / DSM 12127 / PCA) protein is 7-carboxy-7-deazaguanine synthase.